The following is a 136-amino-acid chain: Large-conductance mechanosensitive channel (136 aa).

2 helical membrane-spanning segments follow: residues 9-29 (AFAS…GAAF) and 79-99 (IQTI…VKAI).

This sequence belongs to the MscL family. In terms of assembly, homopentamer.

It is found in the cell inner membrane. Channel that opens in response to stretch forces in the membrane lipid bilayer. May participate in the regulation of osmotic pressure changes within the cell. The polypeptide is Large-conductance mechanosensitive channel (Shewanella baltica (strain OS223)).